Here is a 529-residue protein sequence, read N- to C-terminus: HTH-type transcriptional activator Btr (529 aa).

Residues 182–201 (LAQLSQMAGISAKHYSESFK) constitute a DNA-binding region (H-T-H motif). The Fe/B12 periplasmic-binding domain maps to 268 to 528 (KIAAYGRGTM…QTVSLLSGDC (261 aa)).

Binds with high affinity to both apo-bacillibactin and iron-bacillibactin.

The protein resides in the cytoplasm. In iron-limited conditions, activates expression of the feuABCybbA operon, which encodes the bacillibactin uptake system. Acts by binding directly to a conserved direct repeat element upstream of the feuA promoter. Activity is increased in the presence of bacillibactin. The protein is HTH-type transcriptional activator Btr (btr) of Bacillus subtilis (strain 168).